Here is a 300-residue protein sequence, read N- to C-terminus: Putative hydrolase ML2424 (300 aa).

The active-site Nucleophile is aspartate 56. Mg(2+)-binding residues include aspartate 56, aspartate 58, and aspartate 231. Catalysis depends on aspartate 58, which acts as the Proton donor.

This sequence belongs to the HAD-like hydrolase superfamily. SerB family. It depends on Mg(2+) as a cofactor.

The chain is Putative hydrolase ML2424 from Mycobacterium leprae (strain TN).